A 48-amino-acid chain; its full sequence is uncharacterized protein (48 aa).

The disordered stretch occupies residues 1-48 (MVREKKNPSSAAVSAASVKGDAGPTQHYGGGKRTSQNQQYKKHNMGQS). A compositionally biased stretch (low complexity) spans 9–18 (SSAAVSAASV).

This is an uncharacterized protein from Bacillus subtilis (strain 168).